Consider the following 281-residue polypeptide: Ribosomal protein L11 methyltransferase (281 aa).

S-adenosyl-L-methionine contacts are provided by threonine 133, glycine 154, aspartate 175, and asparagine 216.

The protein belongs to the methyltransferase superfamily. PrmA family.

Its subcellular location is the cytoplasm. The catalysed reaction is L-lysyl-[protein] + 3 S-adenosyl-L-methionine = N(6),N(6),N(6)-trimethyl-L-lysyl-[protein] + 3 S-adenosyl-L-homocysteine + 3 H(+). Methylates ribosomal protein L11. This Campylobacter jejuni subsp. jejuni serotype O:23/36 (strain 81-176) protein is Ribosomal protein L11 methyltransferase.